Here is a 143-residue protein sequence, read N- to C-terminus: Polyadenylate-binding protein-interacting protein 2 (143 aa).

The PAM2-like motif lies at 11-21 (TLNPNAPVFDP).

The polypeptide is Polyadenylate-binding protein-interacting protein 2 (CID2) (Arabidopsis thaliana (Mouse-ear cress)).